The chain runs to 327 residues: DNA-directed RNA polymerase subunit alpha (327 aa).

The interval methionine 1–aspartate 242 is alpha N-terminal domain (alpha-NTD). An alpha C-terminal domain (alpha-CTD) region spans residues lysine 259 to aspartate 327.

It belongs to the RNA polymerase alpha chain family. Homodimer. The RNAP catalytic core consists of 2 alpha, 1 beta, 1 beta' and 1 omega subunit. When a sigma factor is associated with the core the holoenzyme is formed, which can initiate transcription.

The catalysed reaction is RNA(n) + a ribonucleoside 5'-triphosphate = RNA(n+1) + diphosphate. Functionally, DNA-dependent RNA polymerase catalyzes the transcription of DNA into RNA using the four ribonucleoside triphosphates as substrates. This is DNA-directed RNA polymerase subunit alpha from Ureaplasma parvum serovar 3 (strain ATCC 700970).